Consider the following 75-residue polypeptide: Cytochrome c oxidase subunit 6C (75 aa).

At 1 to 13 (MASSALAKPQMRG) the chain is on the mitochondrial matrix side. The helical transmembrane segment at 14 to 54 (LLARRLRIHIVGAFVVSLGVAAFYKYAVAEPRKKAYADFYR) threads the bilayer. Over 55-75 (NYDSVKYFEEMRKAGVFQSVK) the chain is Mitochondrial intermembrane.

The protein belongs to the cytochrome c oxidase subunit 6c family. In terms of assembly, component of the cytochrome c oxidase (complex IV, CIV), a multisubunit enzyme composed of 14 subunits. The complex is composed of a catalytic core of 3 subunits MT-CO1, MT-CO2 and MT-CO3, encoded in the mitochondrial DNA, and 11 supernumerary subunits COX4I, COX5A, COX5B, COX6A, COX6B, COX6C, COX7A, COX7B, COX7C, COX8 and NDUFA4, which are encoded in the nuclear genome. The complex exists as a monomer or a dimer and forms supercomplexes (SCs) in the inner mitochondrial membrane with NADH-ubiquinone oxidoreductase (complex I, CI) and ubiquinol-cytochrome c oxidoreductase (cytochrome b-c1 complex, complex III, CIII), resulting in different assemblies (supercomplex SCI(1)III(2)IV(1) and megacomplex MCI(2)III(2)IV(2)).

It localises to the mitochondrion inner membrane. It participates in energy metabolism; oxidative phosphorylation. Component of the cytochrome c oxidase, the last enzyme in the mitochondrial electron transport chain which drives oxidative phosphorylation. The respiratory chain contains 3 multisubunit complexes succinate dehydrogenase (complex II, CII), ubiquinol-cytochrome c oxidoreductase (cytochrome b-c1 complex, complex III, CIII) and cytochrome c oxidase (complex IV, CIV), that cooperate to transfer electrons derived from NADH and succinate to molecular oxygen, creating an electrochemical gradient over the inner membrane that drives transmembrane transport and the ATP synthase. Cytochrome c oxidase is the component of the respiratory chain that catalyzes the reduction of oxygen to water. Electrons originating from reduced cytochrome c in the intermembrane space (IMS) are transferred via the dinuclear copper A center (CU(A)) of subunit 2 and heme A of subunit 1 to the active site in subunit 1, a binuclear center (BNC) formed by heme A3 and copper B (CU(B)). The BNC reduces molecular oxygen to 2 water molecules using 4 electrons from cytochrome c in the IMS and 4 protons from the mitochondrial matrix. The protein is Cytochrome c oxidase subunit 6C (COX6C) of Nycticebus coucang (Slow loris).